An 81-amino-acid chain; its full sequence is Small ribosomal subunit protein eS21 (81 aa).

The protein belongs to the eukaryotic ribosomal protein eS21 family. As to quaternary structure, component of the 40S small ribosomal subunit.

It localises to the cytoplasm. Its subcellular location is the cytosol. It is found in the rough endoplasmic reticulum. Its function is as follows. Component of the small ribosomal subunit. The ribosome is a large ribonucleoprotein complex responsible for the synthesis of proteins in the cell. This Danio rerio (Zebrafish) protein is Small ribosomal subunit protein eS21 (rps21).